The sequence spans 107 residues: uncharacterized protein (107 aa).

2 disordered regions span residues 51–75 (VQRS…TQSA) and 88–107 (NPTP…APEP). The span at 63–75 (NGNQGSAIPTQSA) shows a compositional bias: polar residues.

This is an uncharacterized protein from Fowl adenovirus A serotype 1 (strain CELO / Phelps) (FAdV-1).